A 211-amino-acid chain; its full sequence is Bcl-2 homologous antagonist/killer (211 aa).

The segment at 1-28 (MASGQGPGPPRQECGEPALPSASEEQVA) is disordered. The residue at position 2 (A2) is an N-acetylalanine. A BH3 motif is present at residues 74–88 (VGRQLAIIGDDINRR). Residues 117 to 136 (SLFESGINWGRVVALLGFGY) carry the BH1 motif. Zn(2+)-binding residues include D160 and H164. Residues 169–184 (RWIAQRGGWVAALNLG) carry the BH2 motif. The chain crosses the membrane as a helical span at residues 188–205 (ILNVLVVLGVVLLGQFVV).

Belongs to the Bcl-2 family. Homodimer. Formation of the homodimer is zinc-dependent. Forms heterodimers with BCL2 and BCL2L1 isoform Bcl-X(L). Forms heterooligomers with BAX. Interacts with BCL2A1. Interacts with RTL10/BOP. Interacts with VDAC1. Interacts with GIMAP3/IAN4 and GIMAP5/IAN5. As to quaternary structure, (Microbial infection) Interacts with vaccinia virus protein F1. In terms of assembly, (Microbial infection) Interacts with myxoma virus protein M11L. (Microbial infection) Interacts with Epstein-Barr virus protein BALF1. As to quaternary structure, (Microbial infection) Interacts with adenovirus protein E1B 19K. In terms of tissue distribution, expressed in a wide variety of tissues, with highest levels in the heart and skeletal muscle.

Its subcellular location is the mitochondrion outer membrane. Plays a role in the mitochondrial apoptotic process. Upon arrival of cell death signals, promotes mitochondrial outer membrane (MOM) permeabilization by oligomerizing to form pores within the MOM. This releases apoptogenic factors into the cytosol, including cytochrome c, promoting the activation of caspase 9 which in turn processes and activates the effector caspases. The protein is Bcl-2 homologous antagonist/killer (BAK1) of Homo sapiens (Human).